A 279-amino-acid polypeptide reads, in one-letter code: Zinc-finger homeodomain protein 1 (279 aa).

A compositionally biased stretch (acidic residues) spans 1-30; the sequence is MEFEDNNNNNDEEQEEDMNLHEEEEDDDAV. Residues 1-62 form a disordered region; the sequence is MEFEDNNNNN…TTSTGGGGGF (62 aa). The ZF-HD dimerization-type zinc finger occupies 75–124; it reads FRECLKNQAVNIGGHAVDGCGEFMPAGIEGTIDALKCAACGCHRNFHRKE. Disordered stretches follow at residues 128 to 199 and 245 to 279; these read FHHA…TKFT and NNKHTLGKSPSPLHHHQAPPPPPPQSSFHHEQDQP. A compositionally biased stretch (pro residues) spans 134-143; it reads QHQPPPPPPG. The homeobox; atypical DNA-binding region spans 191–254; sequence RKRHRTKFTA…NNKHTLGKSP (64 aa).

As to quaternary structure, homo- and heterodimer with other ZFHD proteins. Interacts with MIF1 and MIF2; these interactions prevent nuclear localization and DNA-binding to inhibit transcription regulation activity. Binds to ZHD2, ZHD3, ZHD4, ZHD5, ZHD6, ZHD7, ZHD8, ZHD9, ZHD10 and ZHD11. Mostly expressed in flowers and inflorescence.

The protein resides in the nucleus. Putative transcription factor. The protein is Zinc-finger homeodomain protein 1 (ZHD1) of Arabidopsis thaliana (Mouse-ear cress).